We begin with the raw amino-acid sequence, 484 residues long: Glutamyl-tRNA(Gln) amidotransferase subunit A (484 aa).

Residues Lys76 and Ser151 each act as charge relay system in the active site. The active-site Acyl-ester intermediate is Ser175.

The protein belongs to the amidase family. GatA subfamily. Heterotrimer of A, B and C subunits.

It catalyses the reaction L-glutamyl-tRNA(Gln) + L-glutamine + ATP + H2O = L-glutaminyl-tRNA(Gln) + L-glutamate + ADP + phosphate + H(+). Functionally, allows the formation of correctly charged Gln-tRNA(Gln) through the transamidation of misacylated Glu-tRNA(Gln) in organisms which lack glutaminyl-tRNA synthetase. The reaction takes place in the presence of glutamine and ATP through an activated gamma-phospho-Glu-tRNA(Gln). The chain is Glutamyl-tRNA(Gln) amidotransferase subunit A from Hahella chejuensis (strain KCTC 2396).